A 311-amino-acid chain; its full sequence is tRNA-cytidine(32) 2-sulfurtransferase (311 aa).

The segment at 18 to 38 (KVGADHGPSEENGSSHPLFDN) is disordered. Residues 77 to 82 (SGGKDS) carry the PP-loop motif motif. 3 residues coordinate [4Fe-4S] cluster: C152, C155, and C243.

It belongs to the TtcA family. In terms of assembly, homodimer. Mg(2+) serves as cofactor. It depends on [4Fe-4S] cluster as a cofactor.

It is found in the cytoplasm. It catalyses the reaction cytidine(32) in tRNA + S-sulfanyl-L-cysteinyl-[cysteine desulfurase] + AH2 + ATP = 2-thiocytidine(32) in tRNA + L-cysteinyl-[cysteine desulfurase] + A + AMP + diphosphate + H(+). Its pathway is tRNA modification. In terms of biological role, catalyzes the ATP-dependent 2-thiolation of cytidine in position 32 of tRNA, to form 2-thiocytidine (s(2)C32). The sulfur atoms are provided by the cysteine/cysteine desulfurase (IscS) system. The protein is tRNA-cytidine(32) 2-sulfurtransferase of Agrobacterium fabrum (strain C58 / ATCC 33970) (Agrobacterium tumefaciens (strain C58)).